The chain runs to 136 residues: ATP synthase epsilon chain (136 aa).

The interval 95–115 (DFSEAQSRLEEANKGSDRREQ) is disordered. The segment covering 101–115 (SRLEEANKGSDRREQ) has biased composition (basic and acidic residues).

The protein belongs to the ATPase epsilon chain family. In terms of assembly, F-type ATPases have 2 components, CF(1) - the catalytic core - and CF(0) - the membrane proton channel. CF(1) has five subunits: alpha(3), beta(3), gamma(1), delta(1), epsilon(1). CF(0) has three main subunits: a, b and c.

The protein localises to the cellular thylakoid membrane. In terms of biological role, produces ATP from ADP in the presence of a proton gradient across the membrane. The protein is ATP synthase epsilon chain of Rippkaea orientalis (strain PCC 8801 / RF-1) (Cyanothece sp. (strain PCC 8801)).